The primary structure comprises 210 residues: Pyridoxine/pyridoxamine 5'-phosphate oxidase (210 aa).

Substrate-binding positions include 7 to 10 and Lys65; that span reads RQSY. FMN is bound by residues 60-65, 75-76, Arg81, Lys82, and Gln104; these read RIVLIK and FT. 3 residues coordinate substrate: Tyr122, Arg126, and Ser130. FMN contacts are provided by residues 139–140 and Trp182; that span reads QS. 188–190 contributes to the substrate binding site; it reads RLH. Arg192 contacts FMN.

This sequence belongs to the pyridoxamine 5'-phosphate oxidase family. As to quaternary structure, homodimer. FMN is required as a cofactor.

The catalysed reaction is pyridoxamine 5'-phosphate + O2 + H2O = pyridoxal 5'-phosphate + H2O2 + NH4(+). It catalyses the reaction pyridoxine 5'-phosphate + O2 = pyridoxal 5'-phosphate + H2O2. It functions in the pathway cofactor metabolism; pyridoxal 5'-phosphate salvage; pyridoxal 5'-phosphate from pyridoxamine 5'-phosphate: step 1/1. It participates in cofactor metabolism; pyridoxal 5'-phosphate salvage; pyridoxal 5'-phosphate from pyridoxine 5'-phosphate: step 1/1. Catalyzes the oxidation of either pyridoxine 5'-phosphate (PNP) or pyridoxamine 5'-phosphate (PMP) into pyridoxal 5'-phosphate (PLP). This Bordetella bronchiseptica (strain ATCC BAA-588 / NCTC 13252 / RB50) (Alcaligenes bronchisepticus) protein is Pyridoxine/pyridoxamine 5'-phosphate oxidase.